A 517-amino-acid polypeptide reads, in one-letter code: TBC1 domain family member 22A (517 aa).

Residue Ala-2 is modified to N-acetylalanine. Residues 103–191 (RNHSQRQGRP…PSTLSSSALS (89 aa)) are disordered. Ser-132, Ser-145, and Ser-167 each carry phosphoserine. Residues 163–174 (QRSQSLPHSATV) show a composition bias toward polar residues. The span at 176–190 (LGGTSDPSTLSSSAL) shows a compositional bias: low complexity. In terms of domain architecture, Rab-GAP TBC spans 222 to 446 (GIPKPVRPMT…RLWDTYQSEP (225 aa)).

In terms of assembly, homodimer. Interacts with ACBD3 and ARFGEF1. Interacts with YWHAB, YWHAE, YWHAG, YWHAH, YWHAQ and YWHAZ.

In terms of biological role, may act as a GTPase-activating protein for Rab family protein(s). This Homo sapiens (Human) protein is TBC1 domain family member 22A (TBC1D22A).